The sequence spans 200 residues: 3-isopropylmalate dehydratase small subunit (200 aa).

Belongs to the LeuD family. LeuD type 1 subfamily. In terms of assembly, heterodimer of LeuC and LeuD.

The catalysed reaction is (2R,3S)-3-isopropylmalate = (2S)-2-isopropylmalate. Its pathway is amino-acid biosynthesis; L-leucine biosynthesis; L-leucine from 3-methyl-2-oxobutanoate: step 2/4. Catalyzes the isomerization between 2-isopropylmalate and 3-isopropylmalate, via the formation of 2-isopropylmaleate. The protein is 3-isopropylmalate dehydratase small subunit of Aliivibrio salmonicida (strain LFI1238) (Vibrio salmonicida (strain LFI1238)).